A 400-amino-acid chain; its full sequence is Probable splicing factor YJU2B (400 aa).

The tract at residues 1 to 26 (MGERKGVNKYYPPDFNPEKHGSLNRY) is disordered. Residue Ser40 is modified to Phosphoserine. A coiled-coil region spans residues 182–214 (LNSMLRKRFREKKKAMQEEEERDQALQAKASLA). The interval 255 to 400 (WFPSTPGASA…VADYSGSESE (146 aa)) is disordered. Residues 283–292 (RRATPTSSPV) show a composition bias toward polar residues. Ser310 is modified (phosphoserine). Over residues 327-341 (EGTNQNRPVSPQDCS) the composition is skewed to polar residues. Residues 364-380 (PQPPPDTSPEAPNPQDT) are compositionally biased toward pro residues.

Belongs to the CWC16 family.

The protein localises to the nucleus. May be involved in mRNA splicing. In Bos taurus (Bovine), this protein is Probable splicing factor YJU2B (YJU2B).